The chain runs to 249 residues: DNA polymerase sliding clamp 3 (249 aa).

The protein belongs to the PCNA family. As to quaternary structure, homotrimer. The subunits circularize to form a toroid; DNA passes through its center. Replication factor C (RFC) is required to load the toroid on the DNA.

Its function is as follows. Sliding clamp subunit that acts as a moving platform for DNA processing. Responsible for tethering the catalytic subunit of DNA polymerase and other proteins to DNA during high-speed replication. This chain is DNA polymerase sliding clamp 3, found in Aeropyrum pernix (strain ATCC 700893 / DSM 11879 / JCM 9820 / NBRC 100138 / K1).